We begin with the raw amino-acid sequence, 423 residues long: Glucose-1-phosphate adenylyltransferase (423 aa).

Residues Tyr112, Gly177, 192–193 (EK), and Ser210 each bind alpha-D-glucose 1-phosphate.

This sequence belongs to the bacterial/plant glucose-1-phosphate adenylyltransferase family. Homotetramer.

It carries out the reaction alpha-D-glucose 1-phosphate + ATP + H(+) = ADP-alpha-D-glucose + diphosphate. It functions in the pathway glycan biosynthesis; glycogen biosynthesis. Functionally, involved in the biosynthesis of ADP-glucose, a building block required for the elongation reactions to produce glycogen. Catalyzes the reaction between ATP and alpha-D-glucose 1-phosphate (G1P) to produce pyrophosphate and ADP-Glc. The protein is Glucose-1-phosphate adenylyltransferase of Rhodospirillum rubrum (strain ATCC 11170 / ATH 1.1.1 / DSM 467 / LMG 4362 / NCIMB 8255 / S1).